The chain runs to 96 residues: DNA-directed RNA polymerase subunit Rpo11 (96 aa).

This sequence belongs to the archaeal Rpo11/eukaryotic RPB11/RPC19 RNA polymerase subunit family. In terms of assembly, part of the RNA polymerase complex.

It is found in the cytoplasm. The enzyme catalyses RNA(n) + a ribonucleoside 5'-triphosphate = RNA(n+1) + diphosphate. Functionally, DNA-dependent RNA polymerase (RNAP) catalyzes the transcription of DNA into RNA using the four ribonucleoside triphosphates as substrates. In Methanococcus maripaludis (strain DSM 14266 / JCM 13030 / NBRC 101832 / S2 / LL), this protein is DNA-directed RNA polymerase subunit Rpo11.